The sequence spans 199 residues: uncharacterized protein (199 aa).

The next 6 helical transmembrane spans lie at 1-21 (MEQF…TFIF), 28-48 (IAVS…IALY), 51-71 (LNAA…YLGM), 83-103 (LVAA…WFII), 127-147 (QLVL…FVIQ), and 154-174 (AVGG…LFGI).

The protein resides in the cell membrane. This is an uncharacterized protein from Bacillus subtilis (strain 168).